The sequence spans 601 residues: Elongation factor 4 (601 aa).

A tr-type G domain is found at 7-189 (SNIRNFSIVA…AIVHRLPPPQ (183 aa)). GTP-binding positions include 19-24 (DHGKST) and 136-139 (NKVD).

It belongs to the TRAFAC class translation factor GTPase superfamily. Classic translation factor GTPase family. LepA subfamily.

Its subcellular location is the cell inner membrane. It carries out the reaction GTP + H2O = GDP + phosphate + H(+). In terms of biological role, required for accurate and efficient protein synthesis under certain stress conditions. May act as a fidelity factor of the translation reaction, by catalyzing a one-codon backward translocation of tRNAs on improperly translocated ribosomes. Back-translocation proceeds from a post-translocation (POST) complex to a pre-translocation (PRE) complex, thus giving elongation factor G a second chance to translocate the tRNAs correctly. Binds to ribosomes in a GTP-dependent manner. In Rhodopseudomonas palustris (strain BisB18), this protein is Elongation factor 4.